Here is a 590-residue protein sequence, read N- to C-terminus: MKKPQEMQTMRRKVISDNKPTQEAAKSASNTLSGLNDISTKLDDAQAASELIAQTVEEKSNEIIGAIDNVESAVSDTSAGSELIAETVEIGNNINKEIGESLGSKLDKLTSLLEQKIQTAGIQQTGTSLATVESAIPVKVVEDDTAESVGPLLPAPEAVNNDPDADFFPTPQPVEPKQESPEEKQKKEAFNLKLSQALDKLTKTVDFGFKKSISITDKISSMLFKYTVSAAIEAAKMTAMILAVVVGIDLLMIHFKYWSDKFSKAWDLFSTDFTKFSSETGTWGPLLQSIFDSIDKIKQLWEAGDWGGLTVAIVEGLGKVLFNLGELIQLGMAKLSAAILRVIPGMKDTADEVEGRALENFQNSTGASLNKEDQEKVANYQDKRMNGDLGPIAEGLDKISNWKTRASNWIRGVDNKEALTTDEERAAEEEKLKQLSPEERKNALMKANEARAAMIRFEKYADSADMSKDSTVKSVEAAYEDLKKRMDDPDLNNSPAVKKELAARFSKIDATYQELKKNQPNAKPETSAKSPEAKQVQVIEKNKAQQAPVQQASPSINNTNNVIKKNTVVHNMTPVTSTTAPGVFDATGVN.

Disordered stretches follow at residues 1 to 35 (MKKP…LSGL), 147 to 185 (ESVG…EEKQ), and 515 to 535 (LKKN…EAKQ). The span at 176–185 (PKQESPEEKQ) shows a compositional bias: basic and acidic residues.

The protein resides in the virion. Its function is as follows. Serves as a base for tail tube protein polymerization and acts as a template for tail length determination. The protein is Tape measure protein (29) of Escherichia coli (Bacteriophage T4).